Consider the following 255-residue polypeptide: Thiazole synthase (255 aa).

Lys96 acts as the Schiff-base intermediate with DXP in catalysis. 1-deoxy-D-xylulose 5-phosphate contacts are provided by residues Gly157, 183-184, and 205-206; these read AG and NT.

Belongs to the ThiG family. As to quaternary structure, homotetramer. Forms heterodimers with either ThiH or ThiS.

The protein localises to the cytoplasm. The catalysed reaction is [ThiS sulfur-carrier protein]-C-terminal-Gly-aminoethanethioate + 2-iminoacetate + 1-deoxy-D-xylulose 5-phosphate = [ThiS sulfur-carrier protein]-C-terminal Gly-Gly + 2-[(2R,5Z)-2-carboxy-4-methylthiazol-5(2H)-ylidene]ethyl phosphate + 2 H2O + H(+). Its pathway is cofactor biosynthesis; thiamine diphosphate biosynthesis. Functionally, catalyzes the rearrangement of 1-deoxy-D-xylulose 5-phosphate (DXP) to produce the thiazole phosphate moiety of thiamine. Sulfur is provided by the thiocarboxylate moiety of the carrier protein ThiS. In vitro, sulfur can be provided by H(2)S. The sequence is that of Thiazole synthase from Staphylococcus epidermidis (strain ATCC 35984 / DSM 28319 / BCRC 17069 / CCUG 31568 / BM 3577 / RP62A).